Consider the following 177-residue polypeptide: Crossover junction endodeoxyribonuclease RuvC (177 aa).

Catalysis depends on residues Asp7, Glu68, and Asp141. Mg(2+) contacts are provided by Asp7, Glu68, and Asp141.

It belongs to the RuvC family. In terms of assembly, homodimer which binds Holliday junction (HJ) DNA. The HJ becomes 2-fold symmetrical on binding to RuvC with unstacked arms; it has a different conformation from HJ DNA in complex with RuvA. In the full resolvosome a probable DNA-RuvA(4)-RuvB(12)-RuvC(2) complex forms which resolves the HJ. The cofactor is Mg(2+).

It localises to the cytoplasm. The catalysed reaction is Endonucleolytic cleavage at a junction such as a reciprocal single-stranded crossover between two homologous DNA duplexes (Holliday junction).. Functionally, the RuvA-RuvB-RuvC complex processes Holliday junction (HJ) DNA during genetic recombination and DNA repair. Endonuclease that resolves HJ intermediates. Cleaves cruciform DNA by making single-stranded nicks across the HJ at symmetrical positions within the homologous arms, yielding a 5'-phosphate and a 3'-hydroxyl group; requires a central core of homology in the junction. The consensus cleavage sequence is 5'-(A/T)TT(C/G)-3'. Cleavage occurs on the 3'-side of the TT dinucleotide at the point of strand exchange. HJ branch migration catalyzed by RuvA-RuvB allows RuvC to scan DNA until it finds its consensus sequence, where it cleaves and resolves the cruciform DNA. The chain is Crossover junction endodeoxyribonuclease RuvC from Nocardioides sp. (strain ATCC BAA-499 / JS614).